Consider the following 220-residue polypeptide: Ribonuclease P protein component 3 (220 aa).

This sequence belongs to the eukaryotic/archaeal RNase P protein component 3 family. In terms of assembly, consists of a catalytic RNA component and at least 4-5 protein subunits.

The protein resides in the cytoplasm. The enzyme catalyses Endonucleolytic cleavage of RNA, removing 5'-extranucleotides from tRNA precursor.. Functionally, part of ribonuclease P, a protein complex that generates mature tRNA molecules by cleaving their 5'-ends. The chain is Ribonuclease P protein component 3 from Thermococcus kodakarensis (strain ATCC BAA-918 / JCM 12380 / KOD1) (Pyrococcus kodakaraensis (strain KOD1)).